Reading from the N-terminus, the 261-residue chain is MICOS complex subunit Mic25 (261 aa).

The N-myristoyl glycine moiety is linked to residue Gly-2. A phosphoserine mark is found at Ser-13, Ser-31, and Ser-33. Disordered stretches follow at residues 39-59, 81-114, and 140-165; these read KDCS…PECS, CGPA…VKED, and TEKH…RLTR. Residues 109-202 are a coiled coil; it reads SAVKEDLKKF…AELYKLSSQQ (94 aa). Residues 154–165 show a composition bias toward basic and acidic residues; it reads THEQQQSDRLTR. Residues 220-261 enclose the CHCH domain; the sequence is EPVCSGLQAQILRCYRDHLHEVLLCSDLAKAYQHCVSTARKG. 2 consecutive short sequence motifs (cx9C motif) follow at residues 223 to 233 and 244 to 254; these read CSGLQAQILRC and CSDLAKAYQHC. 2 cysteine pairs are disulfide-bonded: Cys-223–Cys-254 and Cys-233–Cys-244.

It belongs to the MICOS complex subunit Mic19 family. Metazoan Mic25 subfamily. As to quaternary structure, component of the mitochondrial contact site and cristae organizing system (MICOS) complex, composed of at least MICOS10/MIC10, CHCHD3/MIC19, CHCHD6/MIC25, APOOL/MIC27, IMMT/MIC60, APOO/MIC23/MIC26 and MICOS13/MIC13. This complex was also known under the names MINOS or MitOS complex. The MICOS complex associates with mitochondrial outer membrane proteins SAMM50, MTX1 and MTX2 (together described as components of the mitochondrial outer membrane sorting assembly machinery (SAM) complex) and DNAJC11, mitochondrial inner membrane protein TMEM11 and with HSPA9. The MICOS and SAM complexes together with DNAJC11 are part of a large protein complex spanning both membranes termed the mitochondrial intermembrane space bridging (MIB) complex. Interacts with DISC1. Interacts with IMMT/MIC60.

It localises to the mitochondrion inner membrane. Its subcellular location is the mitochondrion. Functionally, component of the MICOS complex, a large protein complex of the mitochondrial inner membrane that plays crucial roles in the maintenance of crista junctions, inner membrane architecture, and formation of contact sites to the outer membrane. This Rattus norvegicus (Rat) protein is MICOS complex subunit Mic25 (Chchd6).